Here is a 222-residue protein sequence, read N- to C-terminus: 2-C-methyl-D-erythritol 4-phosphate cytidylyltransferase (222 aa).

This sequence belongs to the IspD/TarI cytidylyltransferase family. IspD subfamily.

It carries out the reaction 2-C-methyl-D-erythritol 4-phosphate + CTP + H(+) = 4-CDP-2-C-methyl-D-erythritol + diphosphate. It functions in the pathway isoprenoid biosynthesis; isopentenyl diphosphate biosynthesis via DXP pathway; isopentenyl diphosphate from 1-deoxy-D-xylulose 5-phosphate: step 2/6. Catalyzes the formation of 4-diphosphocytidyl-2-C-methyl-D-erythritol from CTP and 2-C-methyl-D-erythritol 4-phosphate (MEP). The protein is 2-C-methyl-D-erythritol 4-phosphate cytidylyltransferase of Porphyromonas gingivalis (strain ATCC BAA-308 / W83).